We begin with the raw amino-acid sequence, 354 residues long: Lysophosphatidic acid receptor 3 (354 aa).

Residues methionine 1 to valine 31 are Extracellular-facing. Residue asparagine 15 is glycosylated (N-linked (GlcNAc...) asparagine). Residues isoleucine 32 to isoleucine 52 form a helical membrane-spanning segment. Residues alanine 53–tyrosine 67 are Cytoplasmic-facing. Residues leucine 68–phenylalanine 88 traverse the membrane as a helical segment. At asparagine 89 to arginine 101 the chain is on the extracellular side. A helical transmembrane segment spans residues tryptophan 102–alanine 124. Topologically, residues valine 125–threonine 146 are cytoplasmic. Residues leucine 147–tryptophan 167 traverse the membrane as a helical segment. Topologically, residues asparagine 168–serine 186 are extracellular. Residue asparagine 172 is glycosylated (N-linked (GlcNAc...) asparagine). A helical transmembrane segment spans residues tyrosine 187–valine 207. Residues arginine 208–threonine 240 are Cytoplasmic-facing. Residues valine 241–leucine 261 form a helical membrane-spanning segment. Topologically, residues aspartate 262 to arginine 276 are extracellular. A helical transmembrane segment spans residues tryptophan 277–tyrosine 295. Topologically, residues lysine 296 to serine 354 are cytoplasmic. The S-palmitoyl cysteine moiety is linked to residue cysteine 309. A disordered region spans residues serine 315–serine 354. Over residues arginine 323–serine 354 the composition is skewed to polar residues.

It belongs to the G-protein coupled receptor 1 family. Most abundantly expressed in testes, kidney, and lung, with moderate levels in small intestine, and low levels in heart, stomach, spleen, and adult and perinatal brain. Little or no expression in embryonic brain, liver, or thymus.

It localises to the cell membrane. In terms of biological role, receptor for lysophosphatidic acid (LPA), a mediator of diverse cellular activities. Seems to be coupled to the G(i)/G(o) and G(q) families of heteromeric G proteins. This is Lysophosphatidic acid receptor 3 (Lpar3) from Mus musculus (Mouse).